The chain runs to 360 residues: Peptide chain release factor 1 (360 aa).

Q237 is modified (N5-methylglutamine).

This sequence belongs to the prokaryotic/mitochondrial release factor family. Methylated by PrmC. Methylation increases the termination efficiency of RF1.

The protein localises to the cytoplasm. Its function is as follows. Peptide chain release factor 1 directs the termination of translation in response to the peptide chain termination codons UAG and UAA. The chain is Peptide chain release factor 1 from Stutzerimonas stutzeri (strain A1501) (Pseudomonas stutzeri).